The following is a 571-amino-acid chain: Ferroportin (571 aa).

The Cytoplasmic portion of the chain corresponds to 1–23 (MTRAGDHNRQRGCCGSLADYLTS). The helical transmembrane segment at 24-53 (AKFLLYLGHSLSTWGDRMWHFAVSVFLVEL) threads the bilayer. Fe cation is bound by residues Asp39 and His43. Topologically, residues 54–57 (YGNS) are extracellular. The helical transmembrane segment at 58–84 (LLLTAVYGLVVAGSVLVLGAIIGDWVD) threads the bilayer. The Cytoplasmic segment spans residues 85-87 (KNA). The helical transmembrane segment at 88–118 (RLKVAQTSLVVQNVSVILCGIILMMVFLHKH) threads the bilayer. The Extracellular segment spans residues 119–126 (ELLTMYHG). Residues 127 to 162 (WVLTSCYILIITIANIANLASTATAITIQRDWIVVV) form a helical membrane-spanning segment. The Cytoplasmic portion of the chain corresponds to 163–164 (AG). A helical membrane pass occupies residues 165-195 (EDRSKLANMNATIRRIDQLTNILAPMAVGQI). Over 196 to 202 (MTFGSPV) the chain is Extracellular. A helical transmembrane segment spans residues 203-229 (IGCGFISGWNLVSMCVEYVLLWKVYQK). Residues 230-306 (TPALAVKAGL…DGWVSYYNQP (77 aa)) are Cytoplasmic-facing. The chain crosses the membrane as a helical span at residues 307 to 333 (VFLAGMGLAFLYMTVLGFDCITTGYAY). Residue Cys326 participates in Fe cation binding. Topologically, residues 334–338 (TQGLS) are extracellular. The helical transmembrane segment at 339-366 (GSILSILMGASAITGIMGTVAFTWLRRK) threads the bilayer. Residues 367-368 (CG) lie on the Cytoplasmic side of the membrane. Residues 369–391 (LVRTGLISGLAQLSCLILCVISV) traverse the membrane as a helical segment. At 392 to 453 (FMPGSPLDLS…ETSPESVPII (62 aa)) the chain is on the extracellular side. A glycan (N-linked (GlcNAc...) asparagine) is linked at Asn434. A helical membrane pass occupies residues 454 to 483 (SVSLLFAGVIAARIGLWSFDLTVTQLLQEN). Residues 484–488 (VIESE) are Cytoplasmic-facing. The chain crosses the membrane as a helical span at residues 489–513 (RGIINGVQNSMNYLLDLLHFIMVIL). Position 507 (His507) interacts with Fe cation. Over 514-516 (APN) the chain is Extracellular. Residues 517 to 542 (PEAFGLLVLISVSFVAMGHIMYFRFA) form a helical membrane-spanning segment. Topologically, residues 543-571 (QNTLGNKLFACGPDAKEVRKENQANTSVV) are cytoplasmic.

It belongs to the ferroportin (FP) (TC 2.A.100) family. SLC40A subfamily. Identified in a complex with STOM. Interacts with HAMP; affinity of the peptide hormone HAMP for SLC40A1 increases by 80-fold in the presence of iron and the interaction promotes SLC40A1 ubiquitination and degradation. Part of a complex composed of SLC40A1/ferroportin, TF/transferrin and HEPH/hephaestin that transfers iron from cells to transferrin. Polyubiquitinated by RNF217; leading to proteasomal degradation. Under conditions of high systemic iron levels, both the hormone peptide hepcidin/HAMP and holo(iron bound)-transferrin/TF induce the ubiquitination, internalization and proteasomal degradation of SLC40A1 to control iron release from cells. In terms of tissue distribution, detected in erythrocytes (at protein level). Expressed in placenta, intestine, muscle and spleen. Highly expressed in mature red blood.

Its subcellular location is the cell membrane. It localises to the basolateral cell membrane. The catalysed reaction is Fe(2+)(in) = Fe(2+)(out). Functionally, transports Fe(2+) from the inside of a cell to the outside of the cell, playing a key role for maintaining systemic iron homeostasis. Transports iron from intestinal, splenic, hepatic cells, macrophages and erythrocytes into the blood to provide iron to other tissues. Controls therefore dietary iron uptake, iron recycling by macrophages and erythrocytes, and release of iron stores in hepatocytes. When iron is in excess in serum, circulating HAMP/hepcidin levels increase resulting in a degradation of SLC40A1, thus limiting the iron efflux to plasma. The polypeptide is Ferroportin (Homo sapiens (Human)).